Here is an 89-residue protein sequence, read N- to C-terminus: Small ribosomal subunit protein uS14 (89 aa).

The interval 32–51 is disordered; sequence DYEGLQKLPKNSSPVRLHNR.

The protein belongs to the universal ribosomal protein uS14 family. In terms of assembly, part of the 30S ribosomal subunit. Contacts proteins S3 and S10.

Its function is as follows. Binds 16S rRNA, required for the assembly of 30S particles and may also be responsible for determining the conformation of the 16S rRNA at the A site. This is Small ribosomal subunit protein uS14 from Christiangramia forsetii (strain DSM 17595 / CGMCC 1.15422 / KT0803) (Gramella forsetii).